A 211-amino-acid polypeptide reads, in one-letter code: Suppressor of cytokine signaling 1 (211 aa).

A disordered region spans residues 1–53 (MVAHNQVAADNAVSTAAEPRRRPEPSSSSSSSPAAPARPRPCPAVPAPAPGDT). Residues 25-35 (PSSSSSSSPAA) show a composition bias toward low complexity. A compositionally biased stretch (pro residues) spans 36 to 49 (PARPRPCPAVPAPA). The tract at residues 55–66 (FRTFRSHADYRR) is kinase inhibitory region (KIR). Residues 67–78 (ITRASALLDACG) form an extended SH2 subdomain (ESS) region. In terms of domain architecture, SH2 spans 79–174 (FYWGPLSVHG…PLRQRRVRPL (96 aa)). The region spanning 161-210 (MLGAPLRQRRVRPLQELCRQRIVATVGRENLARIPLNPVLRDYLSSFPFQ) is the SOCS box domain. Positions 173-182 (PLQELCRQRI) are interaction with Elongin BC complex.

It belongs to the SOCS1 family. In terms of assembly, interacts with multiple activated signaling proteins of the tyrosine kinase signaling pathway including JAK family kinases, TEC, KIT, GRB2 and VAV. Binding to JAKs is mediated through the KIR and SH2 domains to a phosphorylated tyrosine residue within the JAK JH1 domain. Binds the SH3 domain of GRB2 via diproline determinants in the N-terminus, and the N-terminal regulatory domain of VAV. Interacts with the Elongin BC complex (ELOB and ELOC). Component of an ECS CBC(SOCS1) E3 ubiquitin-protein ligase complex which contains Elongin BC, CUL5, RBX1 and SOCS1. Interacts (via SH2 domain and SOCS box) with TRIM8. Interacts with AXL, CUL2 and FGFR3. Interacts with INSR. Interacts with TRIM8. Interacts with DCUN1D1. Interacts with IFNGR1. Expressed in all tissues with high expression in spleen, small intestine and peripheral blood leukocytes.

It localises to the nucleus. Its subcellular location is the cytoplasmic vesicle. The protein operates within protein modification; protein ubiquitination. In terms of biological role, essential negative regulator of type I and type II interferon (IFN) signaling, as well as that of other cytokines, including IL2, IL4, IL6 and leukemia inhibitory factor (LIF). Downregulates cytokine signaling by inhibiting the JAK/STAT signaling pathway. Acts by binding to JAK proteins and to IFNGR1 and inhibiting their kinase activity. In vitro, suppresses Tec protein-tyrosine activity. Regulates IFN-gamma (IFNG)-mediated sensory neuron survival. Probable substrate recognition component of an ECS (Elongin BC-CUL2/5-SOCS-box protein) E3 ubiquitin ligase complex which mediates the ubiquitination and subsequent proteasomal degradation of target proteins. This chain is Suppressor of cytokine signaling 1 (SOCS1), found in Homo sapiens (Human).